We begin with the raw amino-acid sequence, 304 residues long: UDP-N-acetylenolpyruvoylglucosamine reductase (304 aa).

The FAD-binding PCMH-type domain maps to 32 to 198 (RVGGPADILV…LSAELELQEG (167 aa)). Residue Arg177 is part of the active site. Ser227 acts as the Proton donor in catalysis. The active site involves Glu297.

Belongs to the MurB family. It depends on FAD as a cofactor.

The protein localises to the cytoplasm. The enzyme catalyses UDP-N-acetyl-alpha-D-muramate + NADP(+) = UDP-N-acetyl-3-O-(1-carboxyvinyl)-alpha-D-glucosamine + NADPH + H(+). The protein operates within cell wall biogenesis; peptidoglycan biosynthesis. In terms of biological role, cell wall formation. This Clostridioides difficile (strain 630) (Peptoclostridium difficile) protein is UDP-N-acetylenolpyruvoylglucosamine reductase.